A 141-amino-acid chain; its full sequence is Anthrone oxygenase ptaC (141 aa).

An N-terminal signal peptide occupies residues 1 to 19 (MMGLPLMAVPMLLDTGADP). 2 helical membrane passes run 33-53 (GVRTMPPLAITTFILYVWTII) and 64-84 (ILAVAAVVTMGMIPFTWYVLA).

The protein belongs to the anthrone oxygenase family.

The protein localises to the membrane. The protein operates within secondary metabolite biosynthesis. Anthrone oxygenase; part of the gene cluster that mediates the biosynthesis of pestheic acid, a diphenyl ether which is a biosynthetic precursor of the unique chloropupukeananes. The biosynthesis initiates from condensation of acetate and malonate units catalyzed by the non-reducing PKS ptaA. As the ptaA protein is TE/CLC domain-deficient, hydrolysis and Claisen cyclization of the polyketide could be catalyzed by ptaB containing a beta-lactamase domain. The ptaB protein might hydrolyze the thioester bond between the ACP of ptaA and the intermediate to release atrochrysone carboxylic acid, which is spontaneously dehydrated to form endocrocin anthrone. Endocrocin anthrone is then converted to endocrocin, catalyzed by the anthrone oxygenase ptaC. Spontaneous decarboxylation of endocrocin occurs to generate emodin. An O-methyltransferase (ptaH or ptaI) could methylate emodin to form physcion. PtaJ could then catalyze the oxidative cleavage of physcion, and rotation of the intermediate could then afford desmethylisosulochrin. PtaF, a putative NADH-dependent oxidoreductase, might also participate in the oxidative cleavage step. Desmethylisosulochrin is then transformed by another O-methyltransferase (ptaH or ptaI) to form isosulochrin. Chlorination of isosulochrin by ptaM in the cyclohexadienone B ring then produces chloroisosulochrin. PtaE is responsible for the oxidative coupling reactions of both benzophenones isosulochrin and chloroisosulochrin to RES-1214-1 and pestheic acid respectively, regardless of chlorination. In Pestalotiopsis fici (strain W106-1 / CGMCC3.15140), this protein is Anthrone oxygenase ptaC.